The chain runs to 494 residues: GlcNAc-binding protein A (494 aa).

The signal sequence occupies residues 1–21 (MKLNKIMLAMVVMSISGTAMA). The Chitin-binding type-4 domain occupies 22-192 (HGYIENPPSR…TFYNMIDAEF (171 aa)). The region spanning 435–484 (APAWSNKSSYQAKDTVTHNGRIYMSKWWADKASVPGDAAVTDTTGNGSGW) is the Chitin-binding type-3 domain. The interval 474-494 (VTDTTGNGSGWGKVWEDKGAC) is disordered.

It belongs to the GbpA family.

It localises to the secreted. Its function is as follows. Probably interacts with GlcNAc residues. May promote attachment to both epithelial cell surfaces and chitin. The chain is GlcNAc-binding protein A from Yersinia enterocolitica serotype O:8 / biotype 1B (strain NCTC 13174 / 8081).